A 217-amino-acid chain; its full sequence is Probable GTP-binding protein EngB (217 aa).

One can recognise an EngB-type G domain in the interval Ser-37–Asp-214. GTP contacts are provided by residues Gly-45 to Ser-52, Gly-72 to Glu-76, Asp-92 to Gly-95, Thr-159 to Asp-162, and Thr-193 to Ser-195. 2 residues coordinate Mg(2+): Ser-52 and Thr-74.

The protein belongs to the TRAFAC class TrmE-Era-EngA-EngB-Septin-like GTPase superfamily. EngB GTPase family. Requires Mg(2+) as cofactor.

Its function is as follows. Necessary for normal cell division and for the maintenance of normal septation. The protein is Probable GTP-binding protein EngB of Nitrobacter winogradskyi (strain ATCC 25391 / DSM 10237 / CIP 104748 / NCIMB 11846 / Nb-255).